We begin with the raw amino-acid sequence, 711 residues long: MLNFFAAAPRGYEYALSLELAELGASEIKESVAGVYFSAPLELGYRITLWSRLASRIIFVIYKGPCESPEQLYNAAYGIDWQMQFSNRSTFSIDFHGLGGFIKNTQFGALKIKDAIVDRFRDDDFSRPNVERVDADFRIDAHFRRGEITIGINFSGPALHKRGYRSTTGEAPLKENLAANMLVRSGWQADKVDLLDPFCGSGTILIEAAMMACDIAPGIHRERFGFDHWLPHNKKVWQELLNEAQARASIGKTRCEIKFFGSDIDSRLVALAKRNAENAGVLELIDFSVGNALTIDVPVESGFLISNPPYGERLGNVTSLLQLYYQLGDKFKAEFGGWSIAILNSDIELLSALKLKADKQMKMNNGALECAFNLYTVHAENTRRVDPANIKIEGDVSDIAVPFANRIKKNFKQLEKWAKKEGIDSYRLYDADLPEYNVAVDKYLDYVVIQEYSAPSQIPEAVTKRRLTDVLISLPSAIGIDPNHIILKTRERKKGTNQYEKLVANKLELITTEYGAKFKLNLKEYLDTGLFLDHRLTRKLVGEKSKGRSVCNLFSYTGSASVHAALGGATSVTTVDMSNTYIDWAKENFALNGLNSDKYQFVQANCLQWMKRTHDRFDLIFIDPPTFSNSKRMEDSFDVERDHVAMLSDVFKLLNPGGEIIFSNNKRKFKMEIAALEAQGMSIKNIDNQTLPLDFKRNPHIHNTWLITHAG.

The 112-residue stretch at 43 to 154 folds into the THUMP domain; sequence LGYRITLWSR…RGEITIGINF (112 aa).

It belongs to the methyltransferase superfamily. RlmKL family.

The protein resides in the cytoplasm. It carries out the reaction guanosine(2445) in 23S rRNA + S-adenosyl-L-methionine = N(2)-methylguanosine(2445) in 23S rRNA + S-adenosyl-L-homocysteine + H(+). The enzyme catalyses guanosine(2069) in 23S rRNA + S-adenosyl-L-methionine = N(2)-methylguanosine(2069) in 23S rRNA + S-adenosyl-L-homocysteine + H(+). Specifically methylates the guanine in position 2445 (m2G2445) and the guanine in position 2069 (m7G2069) of 23S rRNA. This is Ribosomal RNA large subunit methyltransferase K/L from Shewanella pealeana (strain ATCC 700345 / ANG-SQ1).